The following is a 330-amino-acid chain: Ketol-acid reductoisomerase (NADP(+)) (330 aa).

One can recognise a KARI N-terminal Rossmann domain in the interval 2-182 (VKVYYDADAN…GCTKAGVFET (181 aa)). NADP(+) contacts are provided by residues 25–28 (YGSQ), R48, S51, and 83–86 (DEIQ). Residue H108 is part of the active site. NADP(+) is bound at residue G134. The region spanning 183–328 (SFREETETDL…ARLREMMPWL (146 aa)) is the KARI C-terminal knotted domain. Positions 191, 195, 227, and 231 each coordinate Mg(2+). S252 lines the substrate pocket.

This sequence belongs to the ketol-acid reductoisomerase family. Mg(2+) is required as a cofactor.

The enzyme catalyses (2R)-2,3-dihydroxy-3-methylbutanoate + NADP(+) = (2S)-2-acetolactate + NADPH + H(+). The catalysed reaction is (2R,3R)-2,3-dihydroxy-3-methylpentanoate + NADP(+) = (S)-2-ethyl-2-hydroxy-3-oxobutanoate + NADPH + H(+). The protein operates within amino-acid biosynthesis; L-isoleucine biosynthesis; L-isoleucine from 2-oxobutanoate: step 2/4. It participates in amino-acid biosynthesis; L-valine biosynthesis; L-valine from pyruvate: step 2/4. In terms of biological role, involved in the biosynthesis of branched-chain amino acids (BCAA). Catalyzes an alkyl-migration followed by a ketol-acid reduction of (S)-2-acetolactate (S2AL) to yield (R)-2,3-dihydroxy-isovalerate. In the isomerase reaction, S2AL is rearranged via a Mg-dependent methyl migration to produce 3-hydroxy-3-methyl-2-ketobutyrate (HMKB). In the reductase reaction, this 2-ketoacid undergoes a metal-dependent reduction by NADPH to yield (R)-2,3-dihydroxy-isovalerate. The chain is Ketol-acid reductoisomerase (NADP(+)) from Desulforamulus reducens (strain ATCC BAA-1160 / DSM 100696 / MI-1) (Desulfotomaculum reducens).